The primary structure comprises 303 residues: Taste receptor type 2 member 13 (303 aa).

Over 1–7 (MESALPS) the chain is Extracellular. A helical membrane pass occupies residues 8-28 (IFTLVIIAEFIIGNLSNGFIV). Residues 29-55 (LINCIDWVSKRELSSVDKLLIILAISR) are Cytoplasmic-facing. Residues 56–76 (IGLIWEILVSWFLALHSLAIF) form a helical membrane-spanning segment. The Extracellular portion of the chain corresponds to 77 to 85 (VSGTGLRIM). Residues 86–106 (IFSWIVSNHFNLWLATILSIF) form a helical membrane-spanning segment. Over 107–128 (YLLKIASFSSPAFLYLKRRVNK) the chain is Cytoplasmic. Residues 129–149 (VILMILLGTLVFLFLNLIQIN) form a helical membrane-spanning segment. Residues 150–184 (MLIKDWLDRYERNTTWNFSMSDFETFSVSVRFTMT) lie on the Extracellular side of the membrane. Asparagine 162 and asparagine 166 each carry an N-linked (GlcNAc...) asparagine glycan. Residues 185–205 (MFSLTPFTVAFISFLLLVFSL) traverse the membrane as a helical segment. The Cytoplasmic segment spans residues 206–232 (QKHLQKMQLNYKGHRDPRTKVHTNALK). Residues 233-253 (IVISFLLFYASFFLSILISWI) form a helical membrane-spanning segment. Over 254–261 (SELYQNTV) the chain is Extracellular. A helical membrane pass occupies residues 262–282 (IYMLCETIGAFYPSSHSFLLI). The Cytoplasmic portion of the chain corresponds to 283–303 (LGNAKLRQAFLLVAAKVWAKR).

The protein belongs to the G-protein coupled receptor T2R family.

It localises to the membrane. Functionally, receptor that may play a role in the perception of bitterness and is gustducin-linked. May play a role in sensing the chemical composition of the gastrointestinal content. The activity of this receptor may stimulate alpha gustducin, mediate PLC-beta-2 activation and lead to the gating of TRPM5. This chain is Taste receptor type 2 member 13 (TAS2R13), found in Pan paniscus (Pygmy chimpanzee).